Reading from the N-terminus, the 127-residue chain is Large ribosomal subunit protein bL21c (127 aa).

Belongs to the bacterial ribosomal protein bL21 family. In terms of assembly, part of the 50S ribosomal subunit.

It localises to the plastid. Its subcellular location is the chloroplast. In terms of biological role, this protein binds to 23S rRNA. This Adiantum capillus-veneris (Maidenhair fern) protein is Large ribosomal subunit protein bL21c.